Reading from the N-terminus, the 760-residue chain is Transferrin receptor protein 1 (760 aa).

Residues 1 to 67 lie on the Cytoplasmic side of the membrane; the sequence is MMDQARSAFS…KPKRCSGSIC (67 aa). The interval 1 to 67 is mediates interaction with SH3BP4; that stretch reads MMDQARSAFS…KPKRCSGSIC (67 aa). Phosphoserine is present on residues Ser10 and Ser19. Residue Tyr20 is modified to Phosphotyrosine. An Endocytosis signal motif is present at residues 20-23; the sequence is YTRF. Phosphothreonine is present on Thr21. Phosphoserine is present on Ser24. A Stop-transfer sequence motif is present at residues 58–61; it reads KPKR. Residues Cys62 and Cys67 are each lipidated (S-palmitoyl cysteine). A helical; Signal-anchor for type II membrane protein membrane pass occupies residues 68–88; the sequence is YGTIAVIVFFLIGFMIGYLGY. At 89–760 the chain is on the extracellular side; the sequence is CKGVEPKTEC…GDVWDIDNEF (672 aa). An O-linked (GalNAc...) threonine glycan is attached at Thr104. The 91-residue stretch at 223-313 folds into the PA domain; sequence SKAATVTGKL…GTGDPYTPGF (91 aa). Residues Asn251 and Asn317 are each glycosylated (N-linked (GlcNAc...) asparagine). The interval 569–760 is ligand-binding; sequence TMDTYKELIE…GDVWDIDNEF (192 aa). Residues 646 to 648 carry the Cell attachment site; required for binding to transferrin motif; it reads RGD. A glycan (N-linked (GlcNAc...) asparagine) is linked at Asn727.

The protein belongs to the peptidase M28 family. M28B subfamily. Homodimer; disulfide-linked. Binds one transferrin or HFE molecule per subunit. Binds the HLA class II histocompatibility antigen, DR1. Interacts with SH3BP3. Interacts with STEAP3; facilitates TFRC endocytosis in erythroid precursor cells. Interacts with GRM2. As to quaternary structure, (Microbial infection) Interacts with Guanarito, Junin and Machupo arenavirus glycoprotein complex. In terms of assembly, (Microbial infection) Interacts with rabies virus protein G. (Microbial infection) Interacts with SARS-CoV-2 spike protein S. In terms of processing, stearoylated by ZDHHC6 which inhibits TFRC-mediated activation of the JNK pathway and promotes mitochondrial fragmentation. Stearoylation does not affect iron uptake. N- and O-glycosylated, phosphorylated and palmitoylated. The serum form is only glycosylated. Post-translationally, proteolytically cleaved on Arg-100 to produce the soluble serum form (sTfR). In terms of processing, palmitoylated on both Cys-62 and Cys-67. Cys-62 seems to be the major site of palmitoylation.

Its subcellular location is the cell membrane. It localises to the melanosome. It is found in the secreted. In terms of biological role, cellular uptake of iron occurs via receptor-mediated endocytosis of ligand-occupied transferrin receptor into specialized endosomes. Endosomal acidification leads to iron release. The apotransferrin-receptor complex is then recycled to the cell surface with a return to neutral pH and the concomitant loss of affinity of apotransferrin for its receptor. Transferrin receptor is necessary for development of erythrocytes and the nervous system. A second ligand, the hereditary hemochromatosis protein HFE, competes for binding with transferrin for an overlapping C-terminal binding site. Positively regulates T and B cell proliferation through iron uptake. Acts as a lipid sensor that regulates mitochondrial fusion by regulating activation of the JNK pathway. When dietary levels of stearate (C18:0) are low, promotes activation of the JNK pathway, resulting in HUWE1-mediated ubiquitination and subsequent degradation of the mitofusin MFN2 and inhibition of mitochondrial fusion. When dietary levels of stearate (C18:0) are high, TFRC stearoylation inhibits activation of the JNK pathway and thus degradation of the mitofusin MFN2. Mediates uptake of NICOL1 into fibroblasts where it may regulate extracellular matrix production. Its function is as follows. (Microbial infection) Acts as a receptor for new-world arenaviruses: Guanarito, Junin and Machupo virus. Functionally, (Microbial infection) Acts as a host entry factor for rabies virus that hijacks the endocytosis of TFRC to enter cells. (Microbial infection) Acts as a host entry factor for SARS-CoV, MERS-CoV and SARS-CoV-2 viruses that hijack the endocytosis of TFRC to enter cells. The protein is Transferrin receptor protein 1 (TFRC) of Homo sapiens (Human).